A 538-amino-acid chain; its full sequence is Chaperonin GroEL (538 aa).

Residues 30–33, 87–91, Gly415, 479–481, and Asp495 contribute to the ATP site; these read TLGP, DGTTT, and DAA.

This sequence belongs to the chaperonin (HSP60) family. In terms of assembly, forms a cylinder of 14 subunits composed of two heptameric rings stacked back-to-back. Interacts with the co-chaperonin GroES.

It is found in the cytoplasm. The catalysed reaction is ATP + H2O + a folded polypeptide = ADP + phosphate + an unfolded polypeptide.. Together with its co-chaperonin GroES, plays an essential role in assisting protein folding. The GroEL-GroES system forms a nano-cage that allows encapsulation of the non-native substrate proteins and provides a physical environment optimized to promote and accelerate protein folding. The sequence is that of Chaperonin GroEL from Dictyoglomus thermophilum (strain ATCC 35947 / DSM 3960 / H-6-12).